A 274-amino-acid polypeptide reads, in one-letter code: 2,3,4,5-tetrahydropyridine-2,6-dicarboxylate N-succinyltransferase (274 aa).

Positions 106 and 143 each coordinate substrate.

This sequence belongs to the transferase hexapeptide repeat family. In terms of assembly, homotrimer.

The protein localises to the cytoplasm. The enzyme catalyses (S)-2,3,4,5-tetrahydrodipicolinate + succinyl-CoA + H2O = (S)-2-succinylamino-6-oxoheptanedioate + CoA. It functions in the pathway amino-acid biosynthesis; L-lysine biosynthesis via DAP pathway; LL-2,6-diaminopimelate from (S)-tetrahydrodipicolinate (succinylase route): step 1/3. This chain is 2,3,4,5-tetrahydropyridine-2,6-dicarboxylate N-succinyltransferase, found in Herminiimonas arsenicoxydans.